Here is a 120-residue protein sequence, read N- to C-terminus: NAD(P)H-quinone oxidoreductase subunit 3, chloroplastic (120 aa).

3 consecutive transmembrane segments (helical) span residues 10–30 (FWFF…TSKL), 64–84 (MFAL…PWAM), and 89–109 (LGVY…IGLV).

This sequence belongs to the complex I subunit 3 family. NDH is composed of at least 16 different subunits, 5 of which are encoded in the nucleus.

Its subcellular location is the plastid. It is found in the chloroplast thylakoid membrane. It carries out the reaction a plastoquinone + NADH + (n+1) H(+)(in) = a plastoquinol + NAD(+) + n H(+)(out). It catalyses the reaction a plastoquinone + NADPH + (n+1) H(+)(in) = a plastoquinol + NADP(+) + n H(+)(out). In terms of biological role, NDH shuttles electrons from NAD(P)H:plastoquinone, via FMN and iron-sulfur (Fe-S) centers, to quinones in the photosynthetic chain and possibly in a chloroplast respiratory chain. The immediate electron acceptor for the enzyme in this species is believed to be plastoquinone. Couples the redox reaction to proton translocation, and thus conserves the redox energy in a proton gradient. The polypeptide is NAD(P)H-quinone oxidoreductase subunit 3, chloroplastic (Chaetosphaeridium globosum (Charophycean green alga)).